Consider the following 345-residue polypeptide: Beta-2-glycoprotein 1 (345 aa).

The N-terminal stretch at 1 to 19 (MVSPVLALFSAFLCHVAIA) is a signal peptide. Sushi domains are found at residues 21-81 (RICP…RCVP), 82-139 (RVCP…ACAR), 140-202 (ITCP…ECLE), and 203-262 (VKCP…TCRE). 11 cysteine pairs are disulfide-bonded: cysteine 23-cysteine 66, cysteine 51-cysteine 79, cysteine 84-cysteine 124, cysteine 110-cysteine 137, cysteine 142-cysteine 188, cysteine 174-cysteine 200, cysteine 205-cysteine 248, cysteine 234-cysteine 260, cysteine 264-cysteine 315, cysteine 300-cysteine 325, and cysteine 307-cysteine 345. Threonine 33 carries an O-linked (GalNAc...) threonine glycan. 5 N-linked (GlcNAc...) asparagine glycosylation sites follow: asparagine 105, asparagine 117, asparagine 162, asparagine 183, and asparagine 193. The interval 263–345 (SCKLPVKKAT…KTDASELTPC (83 aa)) is sushi-like.

Expressed by the liver and secreted in plasma.

It localises to the secreted. In terms of biological role, binds to various kinds of negatively charged substances such as heparin, phospholipids, and dextran sulfate. May prevent activation of the intrinsic blood coagulation cascade by binding to phospholipids on the surface of damaged cells. The chain is Beta-2-glycoprotein 1 (Apoh) from Mus musculus (Mouse).